A 659-amino-acid chain; its full sequence is MLIFETYLILFKTVQITKRRIERRRLRLLNQCFTKKEGVSNREMASYNYVEVLQKSMLFYEAQRSGRLPESNRLNWRGDSGLKDGKDVGHDLTGGWYDAGDHVKFGLPMAYSAAVLAWTVYEYREAYEEAELLDEILDQIKWATDYFLKAHTGPNEFWAQVGDGNADHAWWGPAEVMPMNRPAFKIDEHCPGTEVAAQTAAALAAGSIIFKETDASYAAKLLTHAKQLYAFADRYRGKYTDCVTNAQPFYNSWSGYVDELIWGGIWLYLATNEETYLNKALKAVEEWPQDWDYTFTMSWDNTFFASQILLARITKENRFIESTERNLDYWTTGLVQNGKVERITYTPGGLAWLDQWGSLRYAANAAFLAFVYADWVSDQEKKNRYQSFAIKQTHYMLGDNPLNRSYVVGFGQNSPKHPHHRTAHGSWSNQLTNPPSHRHTLYGALVGGPNAQDQYDDDISDYISNEVATDYNAAFTGNIAKMVQLFGEGQSKLPNFPPKEQVEDEFFVEAAVMHNDTTSTQVKAVLYNRSGWPARSSQTLSFRYYVNLSEVFAKGFTEKDIQVTAAYNEGASLSPLKVYDASSRVYFAEIDFTGVVISPRGESEHKKEIQFRLSAPNGSNIWDASNDYSYQGLTSNMQKTTKIPVFEDGVLVFGTLPDK.

The catalytic stretch occupies residues 1 to 500 (MLIFETYLIL…SKLPNFPPKE (500 aa)). Asp-101 (nucleophile) is an active-site residue. Residues 413-433 (NSPKHPHHRTAHGSWSNQLTN) are disordered. Residues His-419, Asp-457, and Glu-466 contribute to the active site. Residues 501-658 (QVEDEFFVEA…GVLVFGTLPD (158 aa)) enclose the CBM3 domain.

The protein belongs to the glycosyl hydrolase 9 (cellulase E) family.

It localises to the secreted. It catalyses the reaction Endohydrolysis of (1-&gt;4)-beta-D-glucosidic linkages in cellulose, lichenin and cereal beta-D-glucans.. Its activity is regulated as follows. Strongly inhibited by ZnCl(2) and by EDTA. In terms of biological role, active on carboxymethyl cellulose and carboxymethyl cellulose-RBB but not avicel, xanthan gum, carboxymethyl-curdulan-RBB or carboxymethyl-xylan-RBB. This chain is Endoglucanase A (eglA), found in Bacillus pumilus (Bacillus mesentericus).